The sequence spans 146 residues: Angiogenin (146 aa).

An N-terminal signal peptide occupies residues 1–24 (MVMGLGLFLLVFMLGLGLTSPTLA). Position 25 is a pyrrolidone carboxylic acid (Q25). The active-site Proton acceptor is H37. A tRNA-binding site is contributed by R45. 3 disulfides stabilise this stretch: C50-C105, C63-C116, and C81-C131. The Nucleolar localization signal signature appears at 55-59 (RRQGM). The tRNA site is built by C105 and I127. H138 acts as the Proton donor in catalysis.

It belongs to the pancreatic ribonuclease family. As to quaternary structure, homodimer. Interacts with RNH1; inhibiting ANG ribonuclease activity. Interacts with PCNA.

The protein resides in the secreted. Its subcellular location is the nucleus. The protein localises to the nucleolus. It localises to the cytoplasm. It is found in the stress granule. Has weak tRNA ribonuclease activity by itself due to partial autoinhibition by its C-terminus, which folds into a short alpha-helix that partially occludes the substrate-binding site. In absence of stress, the ribonuclease activity is inhibited by RNH1 in the cytoplasm. In response to stress, dissociates from RNH1 in the cytoplasm and associates with cytoplasmic ribosomes with vacant A-sites: ribosomes directly activate the tRNA ribonuclease activity of ANG by refolding the C-terminal alpha-helix. In response to stress, the angiogenic activity of ANG is inhibited by RNH1 in the nucleus. Secreted ribonuclease that can either promote or restrict cell proliferation of target cells, depending on the context. Endocytosed in target cells via its receptor PLXNB2 and translocates to the cytoplasm or nucleus. Under stress conditions, localizes to the cytoplasm and promotes the assembly of stress granules (SGs): specifically cleaves a subset of tRNAs within anticodon loops to produce tRNA-derived stress-induced fragments (tiRNAs), resulting in translation repression and inhibition of cell proliferation. tiRNas also prevent formation of apoptosome, thereby promoting cell survival. Preferentially cleaves RNAs between a pyrimidine and an adenosine residue, suggesting that it cleaves the anticodon loop of tRNA(Ala) (32-UUAGCAU-38) after positions 33 and 36. Cleaves a subset of tRNAs, including tRNA(Ala), tRNA(Glu), tRNA(Gly), tRNA(Lys), tRNA(Val), tRNA(His), tRNA(Asp) and tRNA(Sec). Under growth conditions and in differentiated cells, translocates to the nucleus and stimulates ribosomal RNA (rRNA) transcription, including that containing the initiation site sequences of 45S rRNA, thereby promoting cell growth and proliferation. Angiogenin induces vascularization of normal and malignant tissues via its ability to promote rRNA transcription. Involved in hematopoietic stem and progenitor cell (HSPC) growth and survival by promoting rRNA transcription in growth conditions and inhibiting translation in response to stress, respectively. Mediates the crosstalk between myeloid and intestinal epithelial cells to protect the intestinal epithelial barrier integrity: secreted by myeloid cells and promotes intestinal epithelial cells proliferation and survival. Also mediates osteoclast-endothelial cell crosstalk in growing bone: produced by osteoclasts and protects the neighboring vascular cells against senescence by promoting rRNA transcription. This Miopithecus talapoin (Angolan talapoin) protein is Angiogenin (ANG).